The primary structure comprises 160 residues: Vegetative-specific protein V4 (160 aa).

A run of 3 repeats spans residues 151 to 153, 154 to 156, and 157 to 159. Residues 151–159 form a 3 X 3 AA tandem repeats of N-Q-[PG] region; the sequence is NQPNQPNQG.

Unknown. Its expression during growth is not required for growth but for the proper initiation of development, therefore playing a role in the transition from growth to development. In Dictyostelium discoideum (Social amoeba), this protein is Vegetative-specific protein V4 (lmcB).